The chain runs to 668 residues: DNA ligase (668 aa).

Residues 37-41, 86-87, and Glu-116 each bind NAD(+); these read DAIYD and SL. Lys-118 serves as the catalytic N6-AMP-lysine intermediate. NAD(+) contacts are provided by Arg-139, Glu-176, Lys-289, and Lys-313. Cys-407, Cys-410, Cys-425, and Cys-430 together coordinate Zn(2+). A BRCT domain is found at 586–668; sequence AQSSALAGLT…RALIETREMP (83 aa).

Belongs to the NAD-dependent DNA ligase family. LigA subfamily. Mg(2+) serves as cofactor. It depends on Mn(2+) as a cofactor.

The enzyme catalyses NAD(+) + (deoxyribonucleotide)n-3'-hydroxyl + 5'-phospho-(deoxyribonucleotide)m = (deoxyribonucleotide)n+m + AMP + beta-nicotinamide D-nucleotide.. In terms of biological role, DNA ligase that catalyzes the formation of phosphodiester linkages between 5'-phosphoryl and 3'-hydroxyl groups in double-stranded DNA using NAD as a coenzyme and as the energy source for the reaction. It is essential for DNA replication and repair of damaged DNA. The polypeptide is DNA ligase (Gloeobacter violaceus (strain ATCC 29082 / PCC 7421)).